We begin with the raw amino-acid sequence, 506 residues long: Probable cytosol aminopeptidase (506 aa).

Mn(2+) contacts are provided by K270 and D275. K282 is an active-site residue. Positions 293, 352, and 354 each coordinate Mn(2+). Residue R356 is part of the active site.

The protein belongs to the peptidase M17 family. It depends on Mn(2+) as a cofactor.

It localises to the cytoplasm. It catalyses the reaction Release of an N-terminal amino acid, Xaa-|-Yaa-, in which Xaa is preferably Leu, but may be other amino acids including Pro although not Arg or Lys, and Yaa may be Pro. Amino acid amides and methyl esters are also readily hydrolyzed, but rates on arylamides are exceedingly low.. The catalysed reaction is Release of an N-terminal amino acid, preferentially leucine, but not glutamic or aspartic acids.. In terms of biological role, presumably involved in the processing and regular turnover of intracellular proteins. Catalyzes the removal of unsubstituted N-terminal amino acids from various peptides. This chain is Probable cytosol aminopeptidase, found in Photorhabdus laumondii subsp. laumondii (strain DSM 15139 / CIP 105565 / TT01) (Photorhabdus luminescens subsp. laumondii).